Consider the following 283-residue polypeptide: Non-selective voltage-gated ion channel VDAC3 (283 aa).

Cys2 bears the N-acetylcysteine mark. Thr4 is subject to Phosphothreonine. Residues Lys12, Lys15, and Lys20 each carry the N6-acetyllysine modification. The next 2 beta stranded transmembrane spans lie at 26-35 (MVKIDLKTKS) and 39-47 (VEFSTSGHA). A Glycyl lysine isopeptide (Lys-Gly) (interchain with G-Cter in ubiquitin) cross-link involves residue Lys53. 3 beta stranded membrane-spanning segments follow: residues 54–64 (ASGNLETKYKV), 69–76 (LTFTQKWN), and 80–89 (TLGTEISWEN). Lys90 bears the N6-acetyllysine mark. A beta stranded membrane pass occupies residues 95–104 (LKLTLDTIFV). Residues Lys109 and Lys110 each participate in a glycyl lysine isopeptide (Lys-Gly) (interchain with G-Cter in ubiquitin) cross-link. 10 consecutive transmembrane segments (beta stranded) span residues 111–120 (SGKLKASYRR), 123–130 (FSLGSNVD), 137–145 (TIYGWAVLA), 150–158 (LAGYQMSFD), 163–175 (KLSQNNFALGYKA), 178–185 (FQLHTHVN), 189–198 (EFGGSIYQKV), 202–211 (IETSINLAWT), 218–227 (RFGIAAKYKL), and 231–238 (TSLSAKVN). Ser241 is subject to Phosphoserine. NAD(+) is bound by residues 242 to 244 (LIG) and 260 to 264 (SALID). A run of 2 beta stranded transmembrane segments spans residues 242–251 (LIGLGYTQTL) and 254–263 (GVKLTLSALI). Lys266 is modified (N6-acetyllysine; alternate). A Glycyl lysine isopeptide (Lys-Gly) (interchain with G-Cter in ubiquitin); alternate cross-link involves residue Lys266. Residues 273-282 (HKVGLGFELE) form a beta stranded membrane-spanning segment.

It belongs to the eukaryotic mitochondrial porin family. Interacts with ARMC12 in a TBC1D21-dependent manner. Interacts with MISFA. Ubiquitinated by PRKN during mitophagy, leading to its degradation and enhancement of mitophagy. Deubiquitinated by USP30. As to expression, highest levels of expression detected in testis, less but still abundant expression in heart, kidney, brain, and skeletal muscle.

It is found in the mitochondrion outer membrane. The protein resides in the membrane. It catalyses the reaction chloride(in) = chloride(out). The catalysed reaction is K(+)(in) = K(+)(out). In terms of biological role, non-selective voltage-gated ion channel that mediates the transport of anions and cations through the mitochondrion outer membrane and plasma membrane. Forms a high-conducting channel with a stable open state and a voltage-induced closure with a mild preference for anions over cations. Involved in male fertility and sperm mitochondrial sheath formation. This is Non-selective voltage-gated ion channel VDAC3 from Mus musculus (Mouse).